The following is a 299-amino-acid chain: Deoxyhypusine hydroxylase (299 aa).

HEAT-like PBS-type repeat units follow at residues 54–80, 87–113, 174–200, 205–231, and 238–264; these read LKHE…VLQD, VRHE…YSED, DRYR…GLRA, FRHE…ALRS, and VRHE…FAQD. Fe cation is bound by residues histidine 56, histidine 89, and glutamate 90. Fe cation contacts are provided by histidine 207, histidine 240, and glutamate 241.

This sequence belongs to the deoxyhypusine hydroxylase family. It depends on Fe(2+) as a cofactor.

It catalyses the reaction [eIF5A protein]-deoxyhypusine + AH2 + O2 = [eIF5A protein]-hypusine + A + H2O. It participates in protein modification; eIF5A hypusination. Functionally, catalyzes the hydroxylation of the N(6)-(4-aminobutyl)-L-lysine intermediate produced by deoxyhypusine synthase/DHPS on a critical lysine of the eukaryotic translation initiation factor 5A/eIF-5A. This is the second step of the post-translational modification of that lysine into an unusual amino acid residue named hypusine. Hypusination is unique to mature eIF-5A factor and is essential for its function. This chain is Deoxyhypusine hydroxylase, found in Gallus gallus (Chicken).